A 210-amino-acid chain; its full sequence is Ribosomal RNA large subunit methyltransferase E (210 aa).

The S-adenosyl-L-methionine site is built by glycine 61, tryptophan 63, aspartate 81, aspartate 97, and aspartate 122. The active-site Proton acceptor is lysine 162.

Belongs to the class I-like SAM-binding methyltransferase superfamily. RNA methyltransferase RlmE family.

The protein localises to the cytoplasm. The catalysed reaction is uridine(2552) in 23S rRNA + S-adenosyl-L-methionine = 2'-O-methyluridine(2552) in 23S rRNA + S-adenosyl-L-homocysteine + H(+). Its function is as follows. Specifically methylates the uridine in position 2552 of 23S rRNA at the 2'-O position of the ribose in the fully assembled 50S ribosomal subunit. This chain is Ribosomal RNA large subunit methyltransferase E, found in Xanthomonas axonopodis pv. citri (strain 306).